Here is a 124-residue protein sequence, read N- to C-terminus: Small ribosomal subunit protein uS12 (124 aa).

The segment at 1–22 is disordered; sequence MATINQLVRKPRKRKVAKSDVP. Asp-89 is subject to 3-methylthioaspartic acid. Positions 101–124 are disordered; the sequence is TLDTQGVQNRKQGRSKYGAKRPKS. The segment covering 111–124 has biased composition (basic residues); that stretch reads KQGRSKYGAKRPKS.

Belongs to the universal ribosomal protein uS12 family. Part of the 30S ribosomal subunit. Contacts proteins S8 and S17. May interact with IF1 in the 30S initiation complex.

With S4 and S5 plays an important role in translational accuracy. Its function is as follows. Interacts with and stabilizes bases of the 16S rRNA that are involved in tRNA selection in the A site and with the mRNA backbone. Located at the interface of the 30S and 50S subunits, it traverses the body of the 30S subunit contacting proteins on the other side and probably holding the rRNA structure together. The combined cluster of proteins S8, S12 and S17 appears to hold together the shoulder and platform of the 30S subunit. The chain is Small ribosomal subunit protein uS12 from Marinobacter nauticus (strain ATCC 700491 / DSM 11845 / VT8) (Marinobacter aquaeolei).